A 296-amino-acid chain; its full sequence is Nucleotide-binding protein Spy49_0545 (296 aa).

Residue 13-20 participates in ATP binding; sequence GMSGAGKT. 63–66 is a binding site for GTP; the sequence is DMRS.

This sequence belongs to the RapZ-like family.

Its function is as follows. Displays ATPase and GTPase activities. The polypeptide is Nucleotide-binding protein Spy49_0545 (Streptococcus pyogenes serotype M49 (strain NZ131)).